The following is a 625-amino-acid chain: UvrABC system protein C (625 aa).

Residues 13-92 (DKPGVYIMKD…IKKHRPKFNI (80 aa)) enclose the GIY-YIG domain. The 36-residue stretch at 204–239 (EDIIKKLEKDMKEAADNLEFERAARIRDKINSLKHI) folds into the UVR domain.

This sequence belongs to the UvrC family. Interacts with UvrB in an incision complex.

It is found in the cytoplasm. The UvrABC repair system catalyzes the recognition and processing of DNA lesions. UvrC both incises the 5' and 3' sides of the lesion. The N-terminal half is responsible for the 3' incision and the C-terminal half is responsible for the 5' incision. This is UvrABC system protein C from Acetivibrio thermocellus (strain ATCC 27405 / DSM 1237 / JCM 9322 / NBRC 103400 / NCIMB 10682 / NRRL B-4536 / VPI 7372) (Clostridium thermocellum).